A 727-amino-acid chain; its full sequence is Elongation factor 2 (727 aa).

The tr-type G domain occupies 19–260 (EQIRNMGICA…MSIKHLPNPL (242 aa)). Residues 28–35 (AHIDHGKT), 94–98 (DTPGH), and 148–151 (NKVD) contribute to the GTP site. At His603 the chain carries Diphthamide.

Belongs to the TRAFAC class translation factor GTPase superfamily. Classic translation factor GTPase family. EF-G/EF-2 subfamily.

The protein localises to the cytoplasm. In terms of biological role, catalyzes the GTP-dependent ribosomal translocation step during translation elongation. During this step, the ribosome changes from the pre-translocational (PRE) to the post-translocational (POST) state as the newly formed A-site-bound peptidyl-tRNA and P-site-bound deacylated tRNA move to the P and E sites, respectively. Catalyzes the coordinated movement of the two tRNA molecules, the mRNA and conformational changes in the ribosome. This Methanococcus maripaludis (strain DSM 14266 / JCM 13030 / NBRC 101832 / S2 / LL) protein is Elongation factor 2.